Reading from the N-terminus, the 420-residue chain is Histidine--tRNA ligase (420 aa).

Belongs to the class-II aminoacyl-tRNA synthetase family. Homodimer.

The protein resides in the cytoplasm. It carries out the reaction tRNA(His) + L-histidine + ATP = L-histidyl-tRNA(His) + AMP + diphosphate + H(+). This is Histidine--tRNA ligase from Streptomyces avermitilis (strain ATCC 31267 / DSM 46492 / JCM 5070 / NBRC 14893 / NCIMB 12804 / NRRL 8165 / MA-4680).